The chain runs to 425 residues: Aspyridones cluster regulator (425 aa).

A DNA-binding region (zn(2)-C6 fungal-type) is located at residues 100-127; it reads CVDCRASKTRCTGEPEGCKRCTFRKRPC. The segment at 132–159 is disordered; that stretch reads LRRSNTTQHGEQIEASSSTFTMSDEQGS. Over residues 133–157 the composition is skewed to polar residues; the sequence is RRSNTTQHGEQIEASSSTFTMSDEQ.

The protein resides in the nucleus. Functionally, transcription factor involved in regulation of gene cluster that mediates the biosynthesis of aphidicolin. The protein is Aspyridones cluster regulator (TF) of Neocamarosporium betae (Beet black rot fungus).